The primary structure comprises 150 residues: Putative esterase SSO1253 (150 aa).

Belongs to the thioesterase PaaI family.

The chain is Putative esterase SSO1253 from Saccharolobus solfataricus (strain ATCC 35092 / DSM 1617 / JCM 11322 / P2) (Sulfolobus solfataricus).